The sequence spans 198 residues: Probable GTP-binding protein EngB (198 aa).

Residues 22 to 195 (DLPEIALAGR…WKAIHKFTKT (174 aa)) form the EngB-type G domain. Residues 30–37 (GRSNVGKS), 57–61 (GKTQT), 75–78 (DVPG), 142–145 (TKAD), and 174–176 (FSS) contribute to the GTP site. Mg(2+) is bound by residues S37 and T59.

The protein belongs to the TRAFAC class TrmE-Era-EngA-EngB-Septin-like GTPase superfamily. EngB GTPase family. Requires Mg(2+) as cofactor.

Functionally, necessary for normal cell division and for the maintenance of normal septation. The protein is Probable GTP-binding protein EngB of Bacillus cereus (strain B4264).